The sequence spans 348 residues: Small ribosomal subunit protein mS45 (348 aa).

Positions 37–57 (SCSSSSPQSSQPTTHQQQCSS) are enriched in low complexity. Residues 37-63 (SCSSSSPQSSQPTTHQQQCSSFSTTAP) are disordered.

This sequence belongs to the mitochondrion-specific ribosomal protein mS45 family. As to quaternary structure, component of the mitochondrial small ribosomal subunit (mt-SSU). Mature N.crassa 74S mitochondrial ribosomes consist of a small (37S) and a large (54S) subunit. The 37S small subunit contains a 16S ribosomal RNA (16S mt-rRNA) and 32 different proteins. The 54S large subunit contains a 23S rRNA (23S mt-rRNA) and 42 different proteins.

The protein localises to the mitochondrion. Functionally, component of the mitochondrial ribosome (mitoribosome), a dedicated translation machinery responsible for the synthesis of mitochondrial genome-encoded proteins, including at least some of the essential transmembrane subunits of the mitochondrial respiratory chain. The mitoribosomes are attached to the mitochondrial inner membrane and translation products are cotranslationally integrated into the membrane. The polypeptide is Small ribosomal subunit protein mS45 (mrps35) (Neurospora crassa (strain ATCC 24698 / 74-OR23-1A / CBS 708.71 / DSM 1257 / FGSC 987)).